A 485-amino-acid polypeptide reads, in one-letter code: Adenylate kinase 8 (485 aa).

Adenylate kinase regions lie at residues 58–258 (PRVF…TFVL) and 269–471 (PRIL…SYIV). 67-72 (ASGKHT) contacts ATP. Residues 87-113 (TPENVLSSDVSLLVKEAQSYRDKGQEV) form an NMP 1 region. AMP-binding positions include 140–143 (GFPK) and glutamine 147. Positions 177–206 (GKRIDITDGEVYHTTFDWPSDPAVQRNLVE) are LID 1. Arginine 218 is an AMP binding site. ATP is bound at residue 278–283 (GSGRSL). Positions 298-327 (CCGQVLKEAVADQTKLGELIQPYIENDQQV) are NMP 2. AMP is bound by residues 325–327 (QQV), 354–357 (GFPQ), and glutamine 361. The LID 2 stretch occupies residues 391–424 (LCMTDPVSGERYHSIYKPAPRSEVQERLQQNPKY). Residue arginine 432 coordinates AMP.

The protein belongs to the adenylate kinase family.

It is found in the cytoplasm. The protein resides in the cytosol. The catalysed reaction is AMP + ATP = 2 ADP. It catalyses the reaction a 2'-deoxyribonucleoside 5'-diphosphate + ATP = a 2'-deoxyribonucleoside 5'-triphosphate + ADP. It carries out the reaction a ribonucleoside 5'-diphosphate + ATP = a ribonucleoside 5'-triphosphate + ADP. Nucleoside monophosphate (NMP) kinase that catalyzes the reversible transfer of the terminal phosphate group between nucleoside triphosphates and monophosphates. Has highest activity toward AMP, and weaker activity toward dAMP, CMP and dCMP. Also displays broad nucleoside diphosphate kinase activity. This chain is Adenylate kinase 8 (ak8), found in Xenopus laevis (African clawed frog).